Reading from the N-terminus, the 300-residue chain is N-acetylmuramic acid 6-phosphate etherase (300 aa).

The region spanning 57–220 is the SIS domain; it reads VSAAFARQGR…SSAAMIRSGK (164 aa). The active-site Proton donor is Glu85. Glu116 is an active-site residue.

This sequence belongs to the GCKR-like family. MurNAc-6-P etherase subfamily. In terms of assembly, homodimer.

It carries out the reaction N-acetyl-D-muramate 6-phosphate + H2O = N-acetyl-D-glucosamine 6-phosphate + (R)-lactate. Its pathway is amino-sugar metabolism; N-acetylmuramate degradation. The protein operates within amino-sugar metabolism; 1,6-anhydro-N-acetylmuramate degradation. It functions in the pathway cell wall biogenesis; peptidoglycan recycling. In terms of biological role, specifically catalyzes the cleavage of the D-lactyl ether substituent of MurNAc 6-phosphate, producing GlcNAc 6-phosphate and D-lactate. Together with AnmK, is also required for the utilization of anhydro-N-acetylmuramic acid (anhMurNAc) either imported from the medium or derived from its own cell wall murein, and thus plays a role in cell wall recycling. This Edwardsiella ictaluri (strain 93-146) protein is N-acetylmuramic acid 6-phosphate etherase.